The following is a 90-amino-acid chain: Small ribosomal subunit protein uS15c (90 aa).

It belongs to the universal ribosomal protein uS15 family. In terms of assembly, part of the 30S ribosomal subunit.

It is found in the plastid. It localises to the chloroplast. This Zea mays (Maize) protein is Small ribosomal subunit protein uS15c (rps15-A).